A 79-amino-acid chain; its full sequence is Conotoxin TsMSGL-2 (79 aa).

Positions 1–24 are cleaved as a signal peptide; the sequence is MSGLGIMVLTLLLLVFMATSHQDA. The propeptide occupies 25 to 46; sequence GEKQATQRDAVNVRRRRSIAGR. Disulfide bonds link Cys-52/Cys-64, Cys-56/Cys-73, and Cys-63/Cys-77. At Leu-78 the chain carries Leucine amide.

Belongs to the conotoxin O3 superfamily. As to expression, expressed by the venom duct.

The protein resides in the secreted. This is Conotoxin TsMSGL-2 from Conus tessulatus (Tessellate cone).